The sequence spans 242 residues: 3-deoxy-manno-octulosonate cytidylyltransferase (242 aa).

It belongs to the KdsB family.

The protein resides in the cytoplasm. The enzyme catalyses 3-deoxy-alpha-D-manno-oct-2-ulosonate + CTP = CMP-3-deoxy-beta-D-manno-octulosonate + diphosphate. Its pathway is nucleotide-sugar biosynthesis; CMP-3-deoxy-D-manno-octulosonate biosynthesis; CMP-3-deoxy-D-manno-octulosonate from 3-deoxy-D-manno-octulosonate and CTP: step 1/1. It participates in bacterial outer membrane biogenesis; lipopolysaccharide biosynthesis. In terms of biological role, activates KDO (a required 8-carbon sugar) for incorporation into bacterial lipopolysaccharide in Gram-negative bacteria. The chain is 3-deoxy-manno-octulosonate cytidylyltransferase from Anaeromyxobacter dehalogenans (strain 2CP-C).